A 932-amino-acid chain; its full sequence is Protein translocase subunit SecA (932 aa).

Residues Q87, 105-109 (GEGKT), and D515 each bind ATP. Residues C916, C918, C927, and H928 each contribute to the Zn(2+) site.

This sequence belongs to the SecA family. In terms of assembly, monomer and homodimer. Part of the essential Sec protein translocation apparatus which comprises SecA, SecYEG and auxiliary proteins SecDF-YajC and YidC. It depends on Zn(2+) as a cofactor.

It is found in the cell inner membrane. It localises to the cytoplasm. It carries out the reaction ATP + H2O + cellular proteinSide 1 = ADP + phosphate + cellular proteinSide 2.. Functionally, part of the Sec protein translocase complex. Interacts with the SecYEG preprotein conducting channel. Has a central role in coupling the hydrolysis of ATP to the transfer of proteins into and across the cell membrane, serving both as a receptor for the preprotein-SecB complex and as an ATP-driven molecular motor driving the stepwise translocation of polypeptide chains across the membrane. The polypeptide is Protein translocase subunit SecA (Burkholderia multivorans (strain ATCC 17616 / 249)).